The primary structure comprises 300 residues: Recombination-associated protein RdgC (300 aa).

Belongs to the RdgC family.

The protein resides in the cytoplasm. The protein localises to the nucleoid. Functionally, may be involved in recombination. The polypeptide is Recombination-associated protein RdgC (Herminiimonas arsenicoxydans).